Here is a 778-residue protein sequence, read N- to C-terminus: Receptor like protein 28 (778 aa).

An N-terminal signal peptide occupies residues 1-24; that stretch reads MSGSHLRLRFLSLLLLCCVSSSTS. Over 25–739 the chain is Extracellular; it reads SLFTFSYPVL…EEQEQVLNWK (715 aa). Residues N60, N72, N93, N106, N111, N147, N170, and N173 are each glycosylated (N-linked (GlcNAc...) asparagine). 5 LRR repeats span residues 99–123, 125–147, 148–171, 172–195, and 197–219; these read FHQL…EFGN, NKVE…SFSN, LSQL…VQNL, TNLS…LLMM, and FLSY…TSSK. Residues 220–240 form an LRR 6; degenerate repeat; sequence LEILYLGLKPFEGQILEPISK. 6 LRR repeats span residues 241-265, 266-291, 293-313, 314-338, 340-363, and 364-387; these read LINL…LFSS, LKSL…LYIP, TLEK…ILKT, LQKL…LWRL, RLRS…VLVN, and SSME…PLSI. N253 is a glycosylation site (N-linked (GlcNAc...) asparagine). N348 and N363 each carry an N-linked (GlcNAc...) asparagine glycan. The stretch at 388 to 407 is one LRR 13; degenerate repeat; the sequence is KAFSAGYNNFSGEIPLSICN. N-linked (GlcNAc...) asparagine glycosylation is found at N396, N407, N420, N431, and N476. LRR repeat units follow at residues 408 to 429, 430 to 453, 455 to 477, 479 to 500, 501 to 525, 528 to 552, 601 to 625, 626 to 649, 650 to 673, and 678 to 700; these read RSSL…PQCL, SNLT…LCAG, SLQT…LLNC, SLEF…WLKA, LPNL…HQSP, FPEL…YFVN, LNSY…IGLL, KELI…LANA, TELE…LKTL, and YINV…SSFE. Residues N632 and N648 are each glycosylated (N-linked (GlcNAc...) asparagine). N-linked (GlcNAc...) asparagine glycosylation occurs at N680. Residues 740–760 traverse the membrane as a helical segment; that stretch reads AVATGYGTGLLLGLAIAQVIA. Residues 761–778 are Cytoplasmic-facing; it reads SYKPDWLVKIIGLFRFCF.

The protein belongs to the RLP family.

It is found in the cell membrane. This chain is Receptor like protein 28, found in Arabidopsis thaliana (Mouse-ear cress).